We begin with the raw amino-acid sequence, 1793 residues long: Brefeldin A-inhibited guanine nucleotide-exchange protein 2 (1793 aa).

The residue at position 2 (Ala-2) is an N-acetylalanine. Disordered stretches follow at residues 45–71 (NSLQ…PGPL), 266–299 (TMSG…LLDS), and 579–606 (GSPQ…GGTS). Low complexity predominate over residues 55–66 (SSAATDSESESS). The segment covering 270–281 (SGSGSGSGGQDG) has biased composition (gly residues). Composition is skewed to polar residues over residues 284–294 (GTTTVETTNPT) and 594–605 (GSDTYSESSGGT). At Ser-595 the chain carries Phosphoserine. The region spanning 610 to 797 (AIEQRRAYKL…RSLYERITKH (188 aa)) is the SEC7 domain. The active site involves Glu-712. Positions 1311 to 1327 (NKYKGTSGKIPQSSLHS) are enriched in polar residues. Positions 1311 to 1333 (NKYKGTSGKIPQSSLHSGKSGKQ) are disordered.

In terms of assembly, homodimer.

It is found in the cytoplasm. Its subcellular location is the cytosol. The protein localises to the membrane. With respect to regulation, inhibited by brefeldin A. Activates the ARF proteins by exchanging bound GDP for free GTP. Plays a role in vesicular protein sorting. In Arabidopsis thaliana (Mouse-ear cress), this protein is Brefeldin A-inhibited guanine nucleotide-exchange protein 2 (BIG2).